We begin with the raw amino-acid sequence, 210 residues long: Large ribosomal subunit protein uL4 (210 aa).

The segment at 44 to 77 (ARQGNASSKTRSEVRGGGRKPWRQKGTGRARAGS) is disordered. Basic residues predominate over residues 60–71 (GGRKPWRQKGTG).

It belongs to the universal ribosomal protein uL4 family. Part of the 50S ribosomal subunit.

One of the primary rRNA binding proteins, this protein initially binds near the 5'-end of the 23S rRNA. It is important during the early stages of 50S assembly. It makes multiple contacts with different domains of the 23S rRNA in the assembled 50S subunit and ribosome. Its function is as follows. Forms part of the polypeptide exit tunnel. In Microcystis aeruginosa (strain NIES-843 / IAM M-2473), this protein is Large ribosomal subunit protein uL4.